Here is a 127-residue protein sequence, read N- to C-terminus: Urotensin-2 (127 aa).

A signal peptide spans 1–16 (MSKLFFCCLILAGSFC). Positions 17–111 (SFRSLPIIVP…RLQSKDRKQF (95 aa)) are excised as a propeptide. The cysteines at positions 121 and 126 are disulfide-linked.

Belongs to the urotensin-2 family. Central nervous system. Spinal cord.

Its subcellular location is the secreted. Functionally, involved in smooth muscle stimulating and ion mobilizing activities. It has a suggested role as a corticotropin-releasing factor. The sequence is that of Urotensin-2 (UTS2) from Pelophylax ridibundus (Marsh frog).